The sequence spans 218 residues: Guanylate kinase (218 aa).

One can recognise a Guanylate kinase-like domain in the interval 5-188 (GNLFILSAPS…ALLDLTTIVN (184 aa)). ATP is bound at residue 12–19 (APSGAGKS).

Belongs to the guanylate kinase family.

It localises to the cytoplasm. It catalyses the reaction GMP + ATP = GDP + ADP. Its function is as follows. Essential for recycling GMP and indirectly, cGMP. The sequence is that of Guanylate kinase from Colwellia psychrerythraea (strain 34H / ATCC BAA-681) (Vibrio psychroerythus).